Consider the following 351-residue polypeptide: uncharacterized protein (351 aa).

Positions 1–27 (MKNKKRVLIASSLSCAILLLSAATTQA) are cleaved as a signal peptide. The tract at residues 27-71 (ANSAHKDSQDQNKKEHVDKSQQKDKRNVTNKDKNSTAPDDIGKNG) is disordered. A compositionally biased stretch (basic and acidic residues) spans 30-60 (AHKDSQDQNKKEHVDKSQQKDKRNVTNKDKN).

The protein belongs to the aerolysin family.

This is an uncharacterized protein from Staphylococcus aureus (strain USA300).